Reading from the N-terminus, the 215-residue chain is Ribose-5-phosphate isomerase A (215 aa).

Substrate contacts are provided by residues 26–29 (TGST), 79–82 (DGAD), and 92–95 (KGGG). Glu101 functions as the Proton acceptor in the catalytic mechanism. Residue Lys119 participates in substrate binding.

Belongs to the ribose 5-phosphate isomerase family. Homodimer.

It carries out the reaction aldehydo-D-ribose 5-phosphate = D-ribulose 5-phosphate. It functions in the pathway carbohydrate degradation; pentose phosphate pathway; D-ribose 5-phosphate from D-ribulose 5-phosphate (non-oxidative stage): step 1/1. In terms of biological role, catalyzes the reversible conversion of ribose-5-phosphate to ribulose 5-phosphate. The chain is Ribose-5-phosphate isomerase A from Xanthomonas axonopodis pv. citri (strain 306).